The primary structure comprises 92 residues: Small ribosomal subunit protein bS16 (92 aa).

This sequence belongs to the bacterial ribosomal protein bS16 family.

This Staphylococcus carnosus (strain TM300) protein is Small ribosomal subunit protein bS16.